Reading from the N-terminus, the 131-residue chain is Large-conductance mechanosensitive channel (131 aa).

A run of 2 helical transmembrane segments spans residues 14-34 (VMDMAVGIIIGAAFTAIVTSL) and 71-91 (GNFIMAVINFLIIAWVVFLLV).

It belongs to the MscL family. Homopentamer.

It is found in the cell inner membrane. In terms of biological role, channel that opens in response to stretch forces in the membrane lipid bilayer. May participate in the regulation of osmotic pressure changes within the cell. The chain is Large-conductance mechanosensitive channel from Dinoroseobacter shibae (strain DSM 16493 / NCIMB 14021 / DFL 12).